The chain runs to 375 residues: Vasculin (375 aa).

Disordered regions lie at residues 49–109 (SSDA…TSEI) and 356–375 (DSVQKEDSETSSSSDTSDDE). The span at 96–108 (MKSQLHSENNTSE) shows a compositional bias: polar residues. Residues 365–375 (TSSSSDTSDDE) show a composition bias toward low complexity.

This sequence belongs to the vasculin family.

It localises to the nucleus. Its function is as follows. Functions as a GC-rich promoter-specific transactivating transcription factor. This is Vasculin (gpbp1) from Xenopus tropicalis (Western clawed frog).